Here is a 643-residue protein sequence, read N- to C-terminus: Threonine--tRNA ligase (643 aa).

The 61-residue stretch at 1–61 folds into the TGS domain; that stretch reads MPIITLPDGS…SEDSSLEIIT (61 aa). The catalytic stretch occupies residues 243-534; it reads DHRRIGKALD…ITEEYAGFFP (292 aa). Zn(2+)-binding residues include Cys-334, His-385, and His-511.

The protein belongs to the class-II aminoacyl-tRNA synthetase family. As to quaternary structure, homodimer. Zn(2+) is required as a cofactor.

It is found in the cytoplasm. It catalyses the reaction tRNA(Thr) + L-threonine + ATP = L-threonyl-tRNA(Thr) + AMP + diphosphate + H(+). In terms of biological role, catalyzes the attachment of threonine to tRNA(Thr) in a two-step reaction: L-threonine is first activated by ATP to form Thr-AMP and then transferred to the acceptor end of tRNA(Thr). Also edits incorrectly charged L-seryl-tRNA(Thr). This is Threonine--tRNA ligase from Actinobacillus pleuropneumoniae serotype 5b (strain L20).